Reading from the N-terminus, the 1874-residue chain is WD repeat-containing protein 90 (1874 aa).

A disordered region spans residues 1–59; it reads MAGGSGARETRCRQGSRPGSPGSEVPAASVTGPRAEARPAGGGGGSRRAAPDRCSGGVP. 2 positions are modified to phosphoserine: serine 16 and serine 20. The tract at residues 59 to 267 is binds with microtubules; that stretch reads PSAAWQHPFL…VNPMPREMAF (209 aa). The residue at position 301 (serine 301) is a Phosphoserine. WD repeat units follow at residues 469-512, 514-556, 563-603, 677-716, 718-757, 760-799, 844-883, 944-984, 988-1026, and 1031-1068; these read GHTD…SLFR, PLHT…LGGE, VHTD…LRSC, SVGSGIAISSLSVSTATCAVGSEDGYLRLWPLDFSSVLLE, EHDGPVSSVSFSPDGLRVLSTTTSGHLGFLDVPSREYTVL, SHMAPVLALSTEPNRGQMATVSLDHTVRIWDLATLQQLYD, RHRGAITSLVITLDGRFLFSSCSQGSLVQYSCADSQCCVL, NHLD…TLRE, VRSRACCSLALSEDAHLLLAATDRTITVWDYPTQANPSC, and GHSEPVHAVAFTPDQLQVISVGDAIFLWDILATPERDG. A compositionally biased stretch (basic and acidic residues) spans 1066-1075; the sequence is RDGGDHEAPP. Disordered stretches follow at residues 1066–1132 and 1160–1211; these read RDGG…SDEE and ASGA…HFTP. WD repeat units lie at residues 1280–1325, 1328–1369, 1371–1412, 1422–1460, 1462–1500, 1559–1598, 1601–1646, 1649–1688, 1695–1740, 1800–1839, and 1841–1874; these read GHSQ…CRHL, HHDT…LLSS, RLLE…TCFQ, LGASELTSLCYGASPLLYCGSSSGQVCVWDTGTGHCFLA, EADDGEIGVLLCSGSRLISGSNTKRLRLWAVGVVPELRR, GHRTKVNEVVFSPGESHCATCGEDGSVRVWSLASMELVIQ, VLNQ…MELK, PHRTALTAIAFSTDGQTILSGDKDGLVAISHPCTGMTFRV, APIS…DRCE, PLPFFAMSLSLSPGSQLMVVGFAECMMRLLDCASGTAQDL, and GHDDSVHLCRFTPSGRLLFTAAHNEILVWEVTDP.

Belongs to the WD repeat WDR90/POC16 family.

It is found in the cytoplasm. The protein resides in the cytoskeleton. It localises to the microtubule organizing center. The protein localises to the centrosome. Its subcellular location is the centriole. It is found in the centriolar satellite. In terms of biological role, microtubule-binding protein that plays a crucial role in ensuring inner core protein localization within the centriole core, as well as in maintaining the microtubule wall integrity and the overall centriole roundness and stability. Required for efficient primary cilium formation. The sequence is that of WD repeat-containing protein 90 (Wdr90) from Mus musculus (Mouse).